The sequence spans 272 residues: Small ribosomal subunit biogenesis GTPase RsgA (272 aa).

The CP-type G domain maps to 56–207; it reads KNILIRPKVA…IIDTPGFSSI (152 aa). GTP-binding positions include 105 to 108 and 151 to 159; these read TKAD and GQSGVGKTT. Zn(2+) is bound by residues Cys-230, Cys-235, His-237, and Cys-245.

Belongs to the TRAFAC class YlqF/YawG GTPase family. RsgA subfamily. In terms of assembly, monomer. Associates with 30S ribosomal subunit, binds 16S rRNA. It depends on Zn(2+) as a cofactor.

The protein localises to the cytoplasm. Functionally, one of several proteins that assist in the late maturation steps of the functional core of the 30S ribosomal subunit. Helps release RbfA from mature subunits. May play a role in the assembly of ribosomal proteins into the subunit. Circularly permuted GTPase that catalyzes slow GTP hydrolysis, GTPase activity is stimulated by the 30S ribosomal subunit. This chain is Small ribosomal subunit biogenesis GTPase RsgA, found in Mycoplasmopsis pulmonis (strain UAB CTIP) (Mycoplasma pulmonis).